The sequence spans 178 residues: Large ribosomal subunit protein uL6 (178 aa).

It belongs to the universal ribosomal protein uL6 family. Part of the 50S ribosomal subunit.

In terms of biological role, this protein binds to the 23S rRNA, and is important in its secondary structure. It is located near the subunit interface in the base of the L7/L12 stalk, and near the tRNA binding site of the peptidyltransferase center. The polypeptide is Large ribosomal subunit protein uL6 (Corynebacterium aurimucosum (strain ATCC 700975 / DSM 44827 / CIP 107346 / CN-1) (Corynebacterium nigricans)).